Reading from the N-terminus, the 442-residue chain is tRNA-2-methylthio-N(6)-dimethylallyladenosine synthase (442 aa).

One can recognise an MTTase N-terminal domain in the interval 2–120 (KKVFIRTFGC…LPKMIVDKET (119 aa)). Positions 11, 49, 83, 157, 161, and 164 each coordinate [4Fe-4S] cluster. Residues 143–375 (RVEGGAAFVS…NEVIEAETAR (233 aa)) form the Radical SAM core domain. The TRAM domain maps to 378 to 441 (QTMIGTVQRC…TFSLRGKIVE (64 aa)).

It belongs to the methylthiotransferase family. MiaB subfamily. In terms of assembly, monomer. Requires [4Fe-4S] cluster as cofactor.

It is found in the cytoplasm. The catalysed reaction is N(6)-dimethylallyladenosine(37) in tRNA + (sulfur carrier)-SH + AH2 + 2 S-adenosyl-L-methionine = 2-methylsulfanyl-N(6)-dimethylallyladenosine(37) in tRNA + (sulfur carrier)-H + 5'-deoxyadenosine + L-methionine + A + S-adenosyl-L-homocysteine + 2 H(+). Catalyzes the methylthiolation of N6-(dimethylallyl)adenosine (i(6)A), leading to the formation of 2-methylthio-N6-(dimethylallyl)adenosine (ms(2)i(6)A) at position 37 in tRNAs that read codons beginning with uridine. This chain is tRNA-2-methylthio-N(6)-dimethylallyladenosine synthase, found in Neisseria meningitidis serogroup A / serotype 4A (strain DSM 15465 / Z2491).